The primary structure comprises 321 residues: Probable arabinan endo-1,5-alpha-L-arabinosidase A (321 aa).

The N-terminal stretch at methionine 1–glycine 19 is a signal peptide. The Proton acceptor role is filled by aspartate 34. Glutamate 200 serves as the catalytic Proton donor.

Belongs to the glycosyl hydrolase 43 family.

The protein localises to the secreted. It catalyses the reaction Endohydrolysis of (1-&gt;5)-alpha-arabinofuranosidic linkages in (1-&gt;5)-arabinans.. The protein operates within glycan metabolism; L-arabinan degradation. Its function is as follows. Endo-1,5-alpha-L-arabinanase involved in degradation of pectin. Its preferred substrate is linear 1,5-alpha-L-arabinan. The sequence is that of Probable arabinan endo-1,5-alpha-L-arabinosidase A (abnA) from Aspergillus fumigatus (strain ATCC MYA-4609 / CBS 101355 / FGSC A1100 / Af293) (Neosartorya fumigata).